The following is a 705-amino-acid chain: MNPTEAKAVKTEPEKKPQSSKPSVVHEKKTQEVKPKEHTEPKSLPKHSSDTGVKHAPKEKAVSKSSEQPPSEKSTKPKTKSQDKISGGGKSTVPAAAAAASAEPADKNKENKLLTSAVPAESKPSKPSGKSDMDTALDDLIDTLGEPEEMKEDNTTYTGPEVSDPMSSTYIEELGKRESTPPPKYKELLNKEEGIAGPPPDSLKPLGPNDAIDALSSDFTCSSLQLTTCSPTADGKETEKEKSTEEALKAQSAGVIRSAAPPKEKRRKVEEDTMTEQALQALSASLGTRKPEPELDPSSIREVDEAKAKEEKVKKCGEDEETVPSEYRLKPATDKDGKPLLPEAEEKPKPLSESELIDELSEDFDQSKPTEKQSKPTEKTEASPAAAPYPVAEDVPRTSMCSLQSAPPTAAPAKGMVPDDAVEALAGSLPKKEADPEDGKPVEDKVKEKAKEEDRENFGEKEETIPPDYRLEEAKDKDGKPLLPKEVKEPLPPLSEDVLLDALSKDFTVPSDTSSPQFEDAKLSAVVSEVVSQTPAPTTQAAGPPPDCARDNKELDDALDQLSDTLGQRQPDPDENKPVEDKVKEKAKAEHRDKLGERDDTIPPKYQHLLDDNKEGTPGKPKDQRAQGIRNCGEKPAGAQDPIDALSGDFDSCPSTTETSTDTPKDKDKKPASVPKHLGNGGKAKDSTKAKEETSKPKADGKSTS.

2 disordered regions span residues 1 to 211 and 226 to 493; these read MNPT…PNDA and LTTC…PLPP. 2 stretches are compositionally biased toward basic and acidic residues: residues 7–17 and 24–62; these read KAVKTEPEKKP and VVHEKKTQEVKPKEHTEPKSLPKHSSDTGVKHAPKEKAV. Lysine 10 is covalently cross-linked (Glycyl lysine isopeptide (Lys-Gly) (interchain with G-Cter in SUMO2)). An N6-acetyllysine modification is found at lysine 28. Composition is skewed to low complexity over residues 63-72 and 94-103; these read SKSSEQPPSE and PAAAAAASAE. Position 65 is a phosphoserine (serine 65). Threonine 115 is modified (phosphothreonine). Positions 135-151 are enriched in acidic residues; it reads TALDDLIDTLGEPEEMK. The Inhibitory domain 1 repeat unit spans residues 149-202; it reads EMKEDNTTYTGPEVSDPMSSTYIEELGKRESTPPPKYKELLNKEEGIAGPPPDS. Residues 173–194 show a composition bias toward basic and acidic residues; the sequence is ELGKRESTPPPKYKELLNKEEG. Residues serine 202 and serine 230 each carry the phosphoserine modification. Positions 234–248 are enriched in basic and acidic residues; that stretch reads DGKETEKEKSTEEAL. Positions 275–286 are enriched in polar residues; that stretch reads TEQALQALSASL. 2 stretches are compositionally biased toward basic and acidic residues: residues 289 to 317 and 327 to 352; these read RKPEPELDPSSIREVDEAKAKEEKVKKCG and YRLKPATDKDGKPLLPEAEEKPKPLS. One copy of the Inhibitory domain 2 repeat lies at 292–344; the sequence is EPELDPSSIREVDEAKAKEEKVKKCGEDEETVPSEYRLKPATDKDGKPLLPEA. Phosphoserine occurs at positions 352, 354, and 361. The span at 355-364 shows a compositional bias: acidic residues; it reads ELIDELSEDF. The segment covering 365–381 has biased composition (basic and acidic residues); it reads DQSKPTEKQSKPTEKTE. Serine 428 bears the Phosphoserine mark. Residues 430–489 show a composition bias toward basic and acidic residues; it reads PKKEADPEDGKPVEDKVKEKAKEEDRENFGEKEETIPPDYRLEEAKDKDGKPLLPKEVKE. One copy of the Inhibitory domain 3 repeat lies at 434–487; it reads ADPEDGKPVEDKVKEKAKEEDRENFGEKEETIPPDYRLEEAKDKDGKPLLPKEV. Residues serine 504 and serine 515 each carry the phosphoserine modification. The tract at residues 527-705 is disordered; sequence VSEVVSQTPA…KPKADGKSTS (179 aa). Positions 533–542 are enriched in low complexity; sequence QTPAPTTQAA. The residue at position 563 (serine 563) is a Phosphoserine. The stretch at 571–624 is one Inhibitory domain 4 repeat; sequence PDPDENKPVEDKVKEKAKAEHRDKLGERDDTIPPKYQHLLDDNKEGTPGKPKDQ. The span at 571 to 625 shows a compositional bias: basic and acidic residues; that stretch reads PDPDENKPVEDKVKEKAKAEHRDKLGERDDTIPPKYQHLLDDNKEGTPGKPKDQR. The span at 651-662 shows a compositional bias: low complexity; that stretch reads DSCPSTTETSTD. Residues 683 to 705 show a composition bias toward basic and acidic residues; sequence KAKDSTKAKEETSKPKADGKSTS.

It belongs to the protease inhibitor I27 (calpastatin) family.

In terms of biological role, specific inhibition of calpain (calcium-dependent cysteine protease). Plays a key role in postmortem tenderization of meat and have been proposed to be involved in muscle protein degradation in living tissue. The polypeptide is Calpastatin (CAST) (Bos taurus (Bovine)).